Here is a 330-residue protein sequence, read N- to C-terminus: RNA polymerase sigma factor RpoS (330 aa).

The sigma-70 factor domain-1 stretch occupies residues 56–89 (DATQLYLGEIGYSPLLTAEEEVYFARRALRGDVA). The tract at residues 94–164 (MIESNLRLVV…ERAIMNQTRT (71 aa)) is sigma-70 factor domain-2. An Interaction with polymerase core subunit RpoC motif is present at residues 118–121 (DLIE). The sigma-70 factor domain-3 stretch occupies residues 174 to 249 (ELNVYLRTAR…DEKENGPEDT (76 aa)). The tract at residues 262 to 315 (WLFELNAKQREVLARRFGLLGYEAATLEDVGREIGLTRERVRQIQVEGLRRLRE) is sigma-70 factor domain-4. A DNA-binding region (H-T-H motif) is located at residues 288–307 (LEDVGREIGLTRERVRQIQV).

It belongs to the sigma-70 factor family. RpoS subfamily. As to quaternary structure, interacts with the RNA polymerase core enzyme and RssB.

The protein localises to the cytoplasm. Its function is as follows. Sigma factors are initiation factors that promote the attachment of RNA polymerase to specific initiation sites and are then released. This sigma factor is the master transcriptional regulator of the stationary phase and the general stress response. Controls, positively or negatively, the expression of several hundred genes, which are mainly involved in metabolism, transport, regulation and stress management. Functionally, protects stationary phase cells from killing induced by endoribonuclease MazF. The chain is RNA polymerase sigma factor RpoS from Escherichia coli (strain K12).